Reading from the N-terminus, the 522-residue chain is Serine/threonine-protein kinase pak-2 (522 aa).

Residues isoleucine 16–glycine 29 form the CRIB domain. A compositionally biased stretch (polar residues) spans threonine 183–lysine 204. Residues threonine 183–glycine 208 are disordered. Positions leucine 231–phenylalanine 482 constitute a Protein kinase domain. ATP-binding positions include isoleucine 237 to valine 245 and lysine 260. Aspartate 350 functions as the Proton acceptor in the catalytic mechanism.

Belongs to the protein kinase superfamily. STE Ser/Thr protein kinase family. STE20 subfamily. Mg(2+) is required as a cofactor. The cofactor is Mn(2+). In terms of tissue distribution, expressed in pharynx, vulva and spermatheca. Unlike other p21-activated kinases, expression is not detected in neurons.

It carries out the reaction L-seryl-[protein] + ATP = O-phospho-L-seryl-[protein] + ADP + H(+). The enzyme catalyses L-threonyl-[protein] + ATP = O-phospho-L-threonyl-[protein] + ADP + H(+). Serine/threonine-protein kinase which plays a redundant role with pak-1 in embryogenesis but, in contrast to pak-1, is not involved in commissural axon guidance of ventral cord motoneurons or in distal tip cell (DTC) migration. The protein is Serine/threonine-protein kinase pak-2 of Caenorhabditis elegans.